We begin with the raw amino-acid sequence, 251 residues long: Triosephosphate isomerase (251 aa).

A substrate-binding site is contributed by 12–14; it reads NWK. The active-site Electrophile is the H99. E169 acts as the Proton acceptor in catalysis. Residues G175, S214, and 235–236 contribute to the substrate site; that span reads GG.

Belongs to the triosephosphate isomerase family. In terms of assembly, homodimer.

It is found in the cytoplasm. It carries out the reaction D-glyceraldehyde 3-phosphate = dihydroxyacetone phosphate. It functions in the pathway carbohydrate biosynthesis; gluconeogenesis. Its pathway is carbohydrate degradation; glycolysis; D-glyceraldehyde 3-phosphate from glycerone phosphate: step 1/1. Its function is as follows. Involved in the gluconeogenesis. Catalyzes stereospecifically the conversion of dihydroxyacetone phosphate (DHAP) to D-glyceraldehyde-3-phosphate (G3P). This is Triosephosphate isomerase from Bradyrhizobium sp. (strain BTAi1 / ATCC BAA-1182).